A 511-amino-acid chain; its full sequence is ATP synthase subunit alpha (511 aa).

Position 169–176 (169–176 (GDRKTGKT)) interacts with ATP.

This sequence belongs to the ATPase alpha/beta chains family. In terms of assembly, F-type ATPases have 2 components, CF(1) - the catalytic core - and CF(0) - the membrane proton channel. CF(1) has five subunits: alpha(3), beta(3), gamma(1), delta(1), epsilon(1). CF(0) has three main subunits: a(1), b(2) and c(9-12). The alpha and beta chains form an alternating ring which encloses part of the gamma chain. CF(1) is attached to CF(0) by a central stalk formed by the gamma and epsilon chains, while a peripheral stalk is formed by the delta and b chains.

It is found in the cell membrane. The enzyme catalyses ATP + H2O + 4 H(+)(in) = ADP + phosphate + 5 H(+)(out). Produces ATP from ADP in the presence of a proton gradient across the membrane. The alpha chain is a regulatory subunit. The polypeptide is ATP synthase subunit alpha (Latilactobacillus sakei subsp. sakei (strain 23K) (Lactobacillus sakei subsp. sakei)).